The following is a 320-amino-acid chain: Dual oxidase maturation factor 2 (320 aa).

Over 1–21 the chain is Extracellular; the sequence is MTLWNGVLPFYPQPRHAAGFS. A helical transmembrane segment spans residues 22–42; the sequence is VPLLIVILVFLALAASFLLIL. Residues 43–56 lie on the Cytoplasmic side of the membrane; sequence PGIRGHSRWFWLVR. A helical membrane pass occupies residues 57-77; that stretch reads VLLSLFIGAEIVAVHFSAEWF. Topologically, residues 78–183 are extracellular; it reads VGTVNTNTSY…HLAGHYASAT (106 aa). Asparagine 84, asparagine 109, and asparagine 121 each carry an N-linked (GlcNAc...) asparagine glycan. A helical transmembrane segment spans residues 184–204; sequence LWVAFCFWLLSNVLLSTPAPL. The Cytoplasmic segment spans residues 205–206; that stretch reads YG. The helical transmembrane segment at 207-227 threads the bilayer; sequence GLALLTTGAFALFGVFALASI. Residues 228-247 are Extracellular-facing; sequence SSVPLCPLRLGSSALTTQYG. A helical transmembrane segment spans residues 248-268; it reads AAFWVTLATGVLCLFLGGAVV. The Cytoplasmic segment spans residues 269–320; that stretch reads SLQYVRPSALRTLLDQSAKDCSQERGGSPLILGDPLHKQAALPDLKCITTNL.

It belongs to the DUOXA family. As to quaternary structure, heterodimer with DUXA2; disulfide-linked. Interacts with CSNK1G2. Post-translationally, N-glycosylated. In terms of tissue distribution, specifically expressed in thyroid. Also detected in salivary glands.

It localises to the endoplasmic reticulum membrane. Its function is as follows. Required for the maturation and the transport from the endoplasmic reticulum to the plasma membrane of functional DUOX2. May play a role in thyroid hormone synthesis. The sequence is that of Dual oxidase maturation factor 2 (DUOXA2) from Homo sapiens (Human).